The chain runs to 289 residues: Ribosome-inactivating protein alpha-trichosanthin (289 aa).

The signal sequence occupies residues 1-23 (MIRFLVLSLLILTLFLTTPAVEG). Residue Glu183 is part of the active site. Positions 271–289 (AMDDDVPMTQSFGCGSYAI) are cleaved as a propeptide — removed in mature form.

This sequence belongs to the ribosome-inactivating protein family. Type 1 RIP subfamily.

The catalysed reaction is Endohydrolysis of the N-glycosidic bond at one specific adenosine on the 28S rRNA.. Its function is as follows. Inactivates eukaryotic 60S ribosomal subunits. This Trichosanthes kirilowii (Chinese snake gourd) protein is Ribosome-inactivating protein alpha-trichosanthin.